Here is a 411-residue protein sequence, read N- to C-terminus: Peptidase T (411 aa).

H79 lines the Zn(2+) pocket. Residue D81 is part of the active site. D142 is a Zn(2+) binding site. The active-site Proton acceptor is the E176. Residues E177, D199, and H381 each contribute to the Zn(2+) site.

The protein belongs to the peptidase M20B family. Requires Zn(2+) as cofactor.

Its subcellular location is the cytoplasm. The enzyme catalyses Release of the N-terminal residue from a tripeptide.. Its function is as follows. Cleaves the N-terminal amino acid of tripeptides. This Geobacillus kaustophilus (strain HTA426) protein is Peptidase T.